A 20-amino-acid polypeptide reads, in one-letter code: Trypsin inhibitor DE-3 (20 aa).

It belongs to the protease inhibitor I3 (leguminous Kunitz-type inhibitor) family.

Its function is as follows. Inhibition of trypsin. The polypeptide is Trypsin inhibitor DE-3 (Erythrina corallodendron (Coral tree)).